Consider the following 284-residue polypeptide: Tropomyosin beta chain (284 aa).

The residue at position 1 (M1) is an N-acetylmethionine. A disordered region spans residues 1–65 (MDAIKKKMQM…EVEKYSESVK (65 aa)). A coiled-coil region spans residues 1–284 (MDAIKKKMQM…DNALNDITSL (284 aa)). 2 stretches are compositionally biased toward basic and acidic residues: residues 12-40 (KLDKENAIDRAEQAEADKKQAEDRCKQLE) and 51-65 (KGTEDEVEKYSESVK). T53 is modified (phosphothreonine). At S61 the chain carries Phosphoserine; by PIK3CG. Position 79 is a phosphothreonine (T79). Phosphoserine is present on S87. T108 carries the phosphothreonine modification. The tract at residues 117-136 (EKAADESERGMKVIENRAMK) is disordered. A phosphoserine mark is found at S158, S206, and S215. A Phosphothreonine modification is found at T252. Position 261 is a phosphotyrosine (Y261). A Phosphoserine modification is found at S271. T282 bears the Phosphothreonine mark. S283 carries the phosphoserine modification.

It belongs to the tropomyosin family. Homodimer. Heterodimer of an alpha (TPM1, TPM3 or TPM4) and a beta (TPM2) chain. In terms of processing, phosphorylated on Ser-61 by PIK3CG. Phosphorylation on Ser-61 is required for ADRB2 internalization. In terms of tissue distribution, present in primary breast cancer tissue, absent from normal breast tissue.

It localises to the cytoplasm. Its subcellular location is the cytoskeleton. In terms of biological role, binds to actin filaments in muscle and non-muscle cells. Plays a central role, in association with the troponin complex, in the calcium dependent regulation of vertebrate striated muscle contraction. Smooth muscle contraction is regulated by interaction with caldesmon. In non-muscle cells is implicated in stabilizing cytoskeleton actin filaments. The non-muscle isoform may have a role in agonist-mediated receptor internalization. The sequence is that of Tropomyosin beta chain (TPM2) from Homo sapiens (Human).